The chain runs to 387 residues: Synaptotagmin-8 (387 aa).

The Extracellular portion of the chain corresponds to 1–34; it reads MGHPPVSPSAPAPAGTTAIPGLIPDLVAGTPWPR. The helical; Signal-anchor for type III membrane protein transmembrane segment at 35–55 threads the bilayer; that stretch reads WALIAGALAAGVLLVSCLLCA. Over 56–387 the chain is Cytoplasmic; it reads ACCCCRRHRK…LRLRLPLPHS (332 aa). The disordered stretch occupies residues 70-99; sequence KESVGLGSARGTTTTHLVQPDVDGLESSPG. 2 consecutive C2 domains span residues 103–219 and 231–346; these read QWGC…EHWY and QVGE…QHWA.

It belongs to the synaptotagmin family. Homodimer or homooligomer. Homodimerization and homooligomerization do not depend on Ca(2+). Interacts with SYNCRIP isoform 2 C-terminus. Binds inositol 1,3,4,5-tetrakisphosphate (IP4). Binds to AP2 in a Ca(2+)-independent manner. Interacts with STX1A, STX1B and STX2; the interaction is Ca(2+)-dependent.

Its subcellular location is the cell membrane. The protein localises to the cytoplasmic vesicle. It is found in the secretory vesicle. It localises to the acrosome. In terms of biological role, involved in the trafficking and exocytosis of secretory vesicles in non-neuronal tissues. Mediates Ca(2+)-regulation of exocytosis acrosomal reaction in sperm. May mediate Ca(2+)-regulation of exocytosis in insulin secreted cells. The chain is Synaptotagmin-8 (SYT8) from Homo sapiens (Human).